Here is a 210-residue protein sequence, read N- to C-terminus: Probable nicotinate-nucleotide adenylyltransferase (210 aa).

This sequence belongs to the NadD family.

It catalyses the reaction nicotinate beta-D-ribonucleotide + ATP + H(+) = deamido-NAD(+) + diphosphate. It functions in the pathway cofactor biosynthesis; NAD(+) biosynthesis; deamido-NAD(+) from nicotinate D-ribonucleotide: step 1/1. Functionally, catalyzes the reversible adenylation of nicotinate mononucleotide (NaMN) to nicotinic acid adenine dinucleotide (NaAD). This is Probable nicotinate-nucleotide adenylyltransferase from Streptococcus pyogenes serotype M3 (strain ATCC BAA-595 / MGAS315).